The following is a 435-amino-acid chain: E3 ubiquitin-protein ligase RNFT1 (435 aa).

Positions 1 to 62 (MPLFLLSLPT…SSEDASTPQC (62 aa)) are disordered. The span at 16 to 34 (GHERRQRPEAKTSGSEKKY) shows a compositional bias: basic and acidic residues. Positions 40-62 (ANRSQLHSPPGTGSSEDASTPQC) are enriched in polar residues. The next 6 helical transmembrane spans lie at 158–178 (ILIL…LGIG), 203–223 (IQCA…YYTF), 233–253 (IFLN…IVGI), 256–276 (FILK…PSFI), 298–318 (TFVP…FGNV), and 323–343 (LGIL…FGHL). A required for ubiquitin ligase activity and for protection against ER stress-induced cell death region spans residues 368-419 (CSDVDDICSICQAEFQKPILLICQHIFCEECMTLWFNREKTCPLCRTVISDH). Residues 375–413 (CSICQAEFQKPILLICQHIFCEECMTLWFNREKTCPLCR) form an RING-type zinc finger.

As to expression, expressed at highest levels in testis, lower levels in heart, liver, lung, and kidney. Not detected in brain, ovary, and uterus. Down-regulated in testis from patients with maturation arrest (MA) or Sertoli cell-only syndrome (SCOS). Ubiquitously expressed with high expression in testis.

Its subcellular location is the endoplasmic reticulum membrane. The enzyme catalyses S-ubiquitinyl-[E2 ubiquitin-conjugating enzyme]-L-cysteine + [acceptor protein]-L-lysine = [E2 ubiquitin-conjugating enzyme]-L-cysteine + N(6)-ubiquitinyl-[acceptor protein]-L-lysine.. Its pathway is protein modification; protein ubiquitination. Its function is as follows. E3 ubiquitin-protein ligase that acts in the endoplasmic reticulum (ER)-associated degradation (ERAD) pathway, which targets misfolded proteins that accumulate in the endoplasmic reticulum (ER) for ubiquitination and subsequent proteasome-mediated degradation. Protects cells from ER stress-induced apoptosis. In Homo sapiens (Human), this protein is E3 ubiquitin-protein ligase RNFT1 (RNFT1).